The following is a 718-amino-acid chain: Neutral ceramidase B (718 aa).

An N-terminal signal peptide occupies residues 1 to 20 (MINSFKKLIILISLVIILLS). Asn-224 and Asn-252 each carry an N-linked (GlcNAc...) asparagine glycan. Ser-298 acts as the Nucleophile in catalysis. 8 N-linked (GlcNAc...) asparagine glycosylation sites follow: Asn-358, Asn-378, Asn-391, Asn-421, Asn-422, Asn-577, Asn-610, and Asn-614.

This sequence belongs to the neutral ceramidase family.

It localises to the secreted. The enzyme catalyses an N-acylsphing-4-enine + H2O = sphing-4-enine + a fatty acid. In terms of biological role, hydrolyzes the sphingolipid ceramide into sphingosine and free fatty acid. In Dictyostelium discoideum (Social amoeba), this protein is Neutral ceramidase B (dcd2B).